The sequence spans 310 residues: Putative S-adenosyl-L-methionine-dependent methyltransferase MSMEG_1888/MSMEI_1848 (310 aa).

Residues Asp-128 and 157 to 158 (DL) each bind S-adenosyl-L-methionine.

It belongs to the UPF0677 family.

Its function is as follows. Exhibits S-adenosyl-L-methionine-dependent methyltransferase activity. This Mycolicibacterium smegmatis (strain ATCC 700084 / mc(2)155) (Mycobacterium smegmatis) protein is Putative S-adenosyl-L-methionine-dependent methyltransferase MSMEG_1888/MSMEI_1848.